The chain runs to 249 residues: Chitooligosaccharide deacetylase (249 aa).

Mg(2+)-binding residues include His61 and His125.

This sequence belongs to the YdjC deacetylase family. ChbG subfamily. Homodimer. Mg(2+) serves as cofactor.

It is found in the cytoplasm. The catalysed reaction is N,N'-diacetylchitobiose + H2O = N-acetyl-beta-D-glucosaminyl-(1-&gt;4)-D-glucosamine + acetate. The enzyme catalyses diacetylchitobiose-6'-phosphate + H2O = N'-monoacetylchitobiose-6'-phosphate + acetate. It functions in the pathway glycan degradation; chitin degradation. Functionally, involved in the degradation of chitin. ChbG is essential for growth on the acetylated chitooligosaccharides chitobiose and chitotriose but is dispensable for growth on cellobiose and chitosan dimer, the deacetylated form of chitobiose. Deacetylation of chitobiose-6-P and chitotriose-6-P is necessary for both the activation of the chb promoter by the regulatory protein ChbR and the hydrolysis of phosphorylated beta-glucosides by the phospho-beta-glucosidase ChbF. Catalyzes the removal of only one acetyl group from chitobiose-6-P to yield monoacetylchitobiose-6-P, the inducer of ChbR and the substrate of ChbF. The polypeptide is Chitooligosaccharide deacetylase (Escherichia coli (strain K12 / MC4100 / BW2952)).